The chain runs to 92 residues: Large ribosomal subunit protein bL28 (92 aa).

Residues 1-34 (MGRECEITGKKTMFGNNVPRKGLSRKKGGGGQHI) form a disordered region.

Belongs to the bacterial ribosomal protein bL28 family.

The sequence is that of Large ribosomal subunit protein bL28 from Borrelia turicatae (strain 91E135).